The primary structure comprises 215 residues: ATP-dependent Clp protease proteolytic subunit 3 (215 aa).

Serine 119 functions as the Nucleophile in the catalytic mechanism. Histidine 144 is an active-site residue.

Belongs to the peptidase S14 family. Fourteen ClpP subunits assemble into 2 heptameric rings which stack back to back to give a disk-like structure with a central cavity, resembling the structure of eukaryotic proteasomes.

The protein resides in the cytoplasm. The catalysed reaction is Hydrolysis of proteins to small peptides in the presence of ATP and magnesium. alpha-casein is the usual test substrate. In the absence of ATP, only oligopeptides shorter than five residues are hydrolyzed (such as succinyl-Leu-Tyr-|-NHMec, and Leu-Tyr-Leu-|-Tyr-Trp, in which cleavage of the -Tyr-|-Leu- and -Tyr-|-Trp bonds also occurs).. Cleaves peptides in various proteins in a process that requires ATP hydrolysis. Has a chymotrypsin-like activity. Plays a major role in the degradation of misfolded proteins. In Prochlorococcus marinus subsp. pastoris (strain CCMP1986 / NIES-2087 / MED4), this protein is ATP-dependent Clp protease proteolytic subunit 3.